Here is a 771-residue protein sequence, read N- to C-terminus: Hyperosmolality-gated Ca2+ permeable channel 1.2 (771 aa).

Over 1–4 (MATL) the chain is Extracellular. The chain crosses the membrane as a helical span at residues 5–27 (QDIGVSAGINILSAFVFFIIFAV). At 28-100 (LRLQPFNDRV…AGLDSVVYLR (73 aa)) the chain is on the cytoplasmic side. The chain crosses the membrane as a helical span at residues 101–125 (IYWLGLKIFTPIAVLAWAVLVPVNW). Over 126 to 156 (TNNTLEMAKQLRNVTSSDIDKLSVSNIPEYS) the chain is Extracellular. Residues 157-178 (MRFWTHIVMAYAFTIWTCYVLM) traverse the membrane as a helical segment. Residues 179 to 374 (KEYETIANMR…AIPYVSLTVR (196 aa)) are Cytoplasmic-facing. Residues 375 to 401 (RLIMHVAFFFLTFFFIVPIAFVQSLAT) form a helical membrane-spanning segment. Residues 402-419 (IEGIVKAAPFLKFIVDDK) are Extracellular-facing. A helical membrane pass occupies residues 420–445 (FMKSVIQGFLPGIALKLFLAFLPSIL). Over 446-462 (MIMSKFEGFTSISSLER) the chain is Cytoplasmic. A helical transmembrane segment spans residues 463–485 (RAAFRYYIFNLVNVFLASVIAGA). Topologically, residues 486–504 (AFEQLNSFLNQSANQIPKT) are extracellular. Residues 505 to 533 (IGVAIPMKATFFITYIMVDGWAGVAGEIL) form a helical membrane-spanning segment. Over 534 to 566 (MLKPLIMFHLKNAFLVKTDKDREEAMDPGSIGF) the chain is Cytoplasmic. The helical transmembrane segment at 567–588 (NTGEPRIQLYFLLGLVYAPVTP) threads the bilayer. Residue Met-589 is a topological domain, extracellular. The chain crosses the membrane as a helical span at residues 590-605 (LLPFILVFFALAYIVY). Over 606–625 (RHQIINVYNQEYESAAAFWP) the chain is Cytoplasmic. The chain crosses the membrane as a helical span at residues 626-648 (DVHGRVIAALVISQLLLMGLLGT). Residues 649–651 (KHA) lie on the Extracellular side of the membrane. A helical membrane pass occupies residues 652–670 (ALAAPFLIALPVLTIGFHH). At 671 to 771 (FCKGRYEPAF…PSLPFSGKLV (101 aa)) the chain is on the cytoplasmic side. Positions 741-771 (PTKRQSRRNTPAPSIISGDDSPSLPFSGKLV) are disordered.

It belongs to the CSC1 (TC 1.A.17) family. Homodimer.

It is found in the membrane. Its activity is regulated as follows. Activated by hyperosmotic shock after mannitol or NaCl treatment. Activated by mechanical pressure: activated in response to membrane stretch and poke. Membrane lipids play a key role in mechanosensation by acting as a wall mainly formed by lipid head groups. Its function is as follows. Acts as an osmosensitive calcium-permeable cation channel. Specifically conducts cations including Ca(2+), K(+) and Na(+) in vitro. Inactivation or closure of the channel is calcium-dependent. Mechanosensitive ion channel that converts mechanical stimuli into a flow of ions: activated in response to membrane stretch and poke. The polypeptide is Hyperosmolality-gated Ca2+ permeable channel 1.2 (Arabidopsis thaliana (Mouse-ear cress)).